The following is a 999-amino-acid chain: Sarcoplasmic/endoplasmic reticulum calcium ATPase 3 (999 aa).

An N-acetylmethionine modification is found at methionine 1. The Cytoplasmic portion of the chain corresponds to 1–48 (MEEAHLLSAADVLRRFSVTAEGGLSLEQVTDARERYGPNELPTEEGKS). Serine 17 carries the phosphoserine modification. Position 19 is a phosphothreonine (threonine 19). Phosphoserine is present on serine 25. The helical transmembrane segment at 49 to 69 (LWELVVEQFEDLLVRILLLAA) threads the bilayer. The Lumenal segment spans residues 70–89 (LVSFVLAWFEEGEETTTAFV). A helical membrane pass occupies residues 90 to 110 (EPLVIMLILVANAIVGVWQER). At 111–253 (NAESAIEALK…PERTPLQRKL (143 aa)) the chain is on the cytoplasmic side. A helical transmembrane segment spans residues 254 to 273 (DEFGRQLSHAISVICVAVWV). The Lumenal portion of the chain corresponds to 274–295 (INIGHFADPAHGGSWLRGAVYY). A helical transmembrane segment spans residues 296–313 (FKIAVALAVAAIPEGLPA). 4 residues coordinate Ca(2+): valine 304, alanine 305, isoleucine 307, and glutamate 309. The Cytoplasmic portion of the chain corresponds to 314–757 (VITTCLALGT…EEGRAIYNNM (444 aa)). Residue aspartate 351 is the 4-aspartylphosphate intermediate of the active site. Residues aspartate 351 and threonine 353 each contribute to the Mg(2+) site. Threonine 353 is an ATP binding site. An interaction with phospholamban 1 region spans residues 370–400 (AEAEAGTCRLHEFTISGTTYTPEGEVRQGEQ). Phosphothreonine is present on threonine 415. Glutamate 442, arginine 489, lysine 515, arginine 560, threonine 625, glycine 626, and aspartate 627 together coordinate ATP. Serine 662 carries the phosphoserine modification. Residues arginine 678 and lysine 684 each coordinate ATP. Aspartate 703 is a Mg(2+) binding site. Residue asparagine 706 participates in ATP binding. Residues 758-777 (KQFIRYLISSNVGEVVCIFL) form a helical membrane-spanning segment. Positions 768 and 771 each coordinate Ca(2+). The Lumenal segment spans residues 778–787 (TAILGLPEAL). A helical transmembrane segment spans residues 788-808 (IPVQLLWVNLVTDGLPATALG). The tract at residues 788 to 808 (IPVQLLWVNLVTDGLPATALG) is interaction with phospholamban 2. Residues asparagine 796, threonine 799, and aspartate 800 each coordinate Ca(2+). Topologically, residues 809-828 (FNPPDLDIMEKPPRNPREAL) are cytoplasmic. The helical transmembrane segment at 829–851 (ISGWLFFRYLAIGVYVGLATVAA) threads the bilayer. Residues 852 to 897 (ATWWFLYDTEGPQVTFYQLRNFLKCSEDNPLFAGIDCKVFESRFPT) are Lumenal-facing. A helical transmembrane segment spans residues 898–917 (TMALSVLVTIEMCNALNSVS). Glutamate 908 contacts Ca(2+). Residues 918–930 (ENQSLLRMPPWLN) are Cytoplasmic-facing. The helical transmembrane segment at 931-949 (PWLLGAVVMSMALHFLILL) threads the bilayer. Residues 950–964 (VPPLPLIFQVTPLSG) lie on the Lumenal side of the membrane. A helical membrane pass occupies residues 965 to 985 (RQWGVVLQMSLPVILLDEALK). Topologically, residues 986 to 999 (YLSRNHMDEKKDLK) are cytoplasmic.

This sequence belongs to the cation transport ATPase (P-type) (TC 3.A.3) family. Type IIA subfamily. Interacts with sarcolipin (SLN). Interacts with phospholamban (PLN). Interacts with myoregulin (MRLN). Interacts with DWORF. Interacts with VMP1. Interacts with TUNAR; the interaction occurs at low levels in low glucose conditions and is increased by high glucose levels. Mg(2+) is required as a cofactor.

The protein resides in the endoplasmic reticulum membrane. The protein localises to the sarcoplasmic reticulum membrane. It carries out the reaction Ca(2+)(in) + ATP + H2O = Ca(2+)(out) + ADP + phosphate + H(+). Inhibited by sarcolipin (SLN), phospholamban (PLN) and myoregulin (MRLN). Enhanced by DWORF; DWORF increases activity by displacing sarcolipin (SLN), phospholamban (PLN) and myoregulin (MRLN). Functionally, this magnesium-dependent enzyme catalyzes the hydrolysis of ATP coupled with the transport of calcium. Transports calcium ions from the cytosol into the sarcoplasmic/endoplasmic reticulum lumen. Contributes to calcium sequestration involved in muscular excitation/contraction. The chain is Sarcoplasmic/endoplasmic reticulum calcium ATPase 3 (Atp2a3) from Mus musculus (Mouse).